A 207-amino-acid polypeptide reads, in one-letter code: Cytochrome c biogenesis ATP-binding export protein CcmA 1 (207 aa).

The ABC transporter domain occupies 6-207 (LEALDLAGVR…KTSQTVRMGA (202 aa)). 38 to 45 (GENGSGKT) provides a ligand contact to ATP.

Belongs to the ABC transporter superfamily. CcmA exporter (TC 3.A.1.107) family. In terms of assembly, the complex is composed of two ATP-binding proteins (CcmA) and two transmembrane proteins (CcmB).

Its subcellular location is the cell inner membrane. It catalyses the reaction heme b(in) + ATP + H2O = heme b(out) + ADP + phosphate + H(+). In terms of biological role, part of the ABC transporter complex CcmAB involved in the biogenesis of c-type cytochromes; once thought to export heme, this seems not to be the case, but its exact role is uncertain. Responsible for energy coupling to the transport system. This is Cytochrome c biogenesis ATP-binding export protein CcmA 1 from Cupriavidus metallidurans (strain ATCC 43123 / DSM 2839 / NBRC 102507 / CH34) (Ralstonia metallidurans).